A 746-amino-acid polypeptide reads, in one-letter code: NAD(P)H-quinone oxidoreductase subunit 5, chloroplastic (746 aa).

15 consecutive transmembrane segments (helical) span residues Trp9–Val29, Trp40–Ile60, Ile89–Ile109, Leu122–Val139, Ile147–Thr167, Gly185–Phe205, Asn219–Ala239, Thr258–Ala278, Leu280–Ile300, Leu327–Ile347, Thr396–Ser416, Trp425–Tyr445, Leu546–Phe566, Ile605–Ile625, and Tyr722–Phe742.

It belongs to the complex I subunit 5 family. NDH is composed of at least 16 different subunits, 5 of which are encoded in the nucleus.

The protein resides in the plastid. Its subcellular location is the chloroplast thylakoid membrane. It catalyses the reaction a plastoquinone + NADH + (n+1) H(+)(in) = a plastoquinol + NAD(+) + n H(+)(out). The enzyme catalyses a plastoquinone + NADPH + (n+1) H(+)(in) = a plastoquinol + NADP(+) + n H(+)(out). In terms of biological role, NDH shuttles electrons from NAD(P)H:plastoquinone, via FMN and iron-sulfur (Fe-S) centers, to quinones in the photosynthetic chain and possibly in a chloroplast respiratory chain. The immediate electron acceptor for the enzyme in this species is believed to be plastoquinone. Couples the redox reaction to proton translocation, and thus conserves the redox energy in a proton gradient. The chain is NAD(P)H-quinone oxidoreductase subunit 5, chloroplastic (ndhF) from Calycanthus floridus var. glaucus (Eastern sweetshrub).